The primary structure comprises 655 residues: Gastrulation defective protein 1 homolog (655 aa).

Disordered stretches follow at residues 1–54 and 83–165; these read MQRG…EQMI and AKVF…DEQS. Composition is skewed to basic and acidic residues over residues 23–36, 91–115, and 134–146; these read RSNE…KEST, QIEK…KEDD, and TDKE…SSKD. A compositionally biased stretch (acidic residues) spans 147–164; that stretch reads EDSDDDDYSSDEDSDDEQ. WD repeat units follow at residues 180–219, 227–268, 281–321, 330–369, 377–416, 422–467, and 470–510; these read HGSR…SSMR, CENH…ECCK, GHVA…EQLQ, GLRT…VNTT, QKGS…QPLH, FSRY…EVQR, and VSNA…RGAK. Disordered regions lie at residues 544–580 and 633–655; these read KSRT…VASS and AIFS…EADK. Basic and acidic residues-rich tracts occupy residues 554–564 and 639–655; these read KARMDPVKSQR and LPAD…EADK.

The protein belongs to the WD repeat GAD-1 family.

The chain is Gastrulation defective protein 1 homolog from Drosophila melanogaster (Fruit fly).